The following is a 207-amino-acid chain: Thiamine-phosphate synthase (207 aa).

4-amino-2-methyl-5-(diphosphooxymethyl)pyrimidine-binding positions include 37-41 (QYRDK) and Asn69. Residues Asp70 and Asp89 each coordinate Mg(2+). 4-amino-2-methyl-5-(diphosphooxymethyl)pyrimidine is bound at residue Ser108. Residue 135 to 137 (SRT) participates in 2-[(2R,5Z)-2-carboxy-4-methylthiazol-5(2H)-ylidene]ethyl phosphate binding. Lys138 is a binding site for 4-amino-2-methyl-5-(diphosphooxymethyl)pyrimidine. 2-[(2R,5Z)-2-carboxy-4-methylthiazol-5(2H)-ylidene]ethyl phosphate is bound at residue Gly164.

The protein belongs to the thiamine-phosphate synthase family. Mg(2+) serves as cofactor.

The enzyme catalyses 2-[(2R,5Z)-2-carboxy-4-methylthiazol-5(2H)-ylidene]ethyl phosphate + 4-amino-2-methyl-5-(diphosphooxymethyl)pyrimidine + 2 H(+) = thiamine phosphate + CO2 + diphosphate. It catalyses the reaction 2-(2-carboxy-4-methylthiazol-5-yl)ethyl phosphate + 4-amino-2-methyl-5-(diphosphooxymethyl)pyrimidine + 2 H(+) = thiamine phosphate + CO2 + diphosphate. It carries out the reaction 4-methyl-5-(2-phosphooxyethyl)-thiazole + 4-amino-2-methyl-5-(diphosphooxymethyl)pyrimidine + H(+) = thiamine phosphate + diphosphate. It functions in the pathway cofactor biosynthesis; thiamine diphosphate biosynthesis; thiamine phosphate from 4-amino-2-methyl-5-diphosphomethylpyrimidine and 4-methyl-5-(2-phosphoethyl)-thiazole: step 1/1. Condenses 4-methyl-5-(beta-hydroxyethyl)thiazole monophosphate (THZ-P) and 2-methyl-4-amino-5-hydroxymethyl pyrimidine pyrophosphate (HMP-PP) to form thiamine monophosphate (TMP). This chain is Thiamine-phosphate synthase, found in Chromobacterium violaceum (strain ATCC 12472 / DSM 30191 / JCM 1249 / CCUG 213 / NBRC 12614 / NCIMB 9131 / NCTC 9757 / MK).